Consider the following 283-residue polypeptide: Phosphatidylglycerol--prolipoprotein diacylglyceryl transferase (283 aa).

Transmembrane regions (helical) follow at residues 20-40, 51-71, 97-117, and 123-143; these read LGPV…FVAM, GGNP…GIIG, ITNG…AVYF, and GVAF…AQAI. Arg145 lines the a 1,2-diacyl-sn-glycero-3-phospho-(1'-sn-glycerol) pocket. A run of 2 helical transmembrane segments spans residues 192–212 and 255–275; these read VHPT…VLLW and INVI…FALR.

Belongs to the Lgt family.

The protein resides in the cell membrane. It carries out the reaction L-cysteinyl-[prolipoprotein] + a 1,2-diacyl-sn-glycero-3-phospho-(1'-sn-glycerol) = an S-1,2-diacyl-sn-glyceryl-L-cysteinyl-[prolipoprotein] + sn-glycerol 1-phosphate + H(+). The protein operates within protein modification; lipoprotein biosynthesis (diacylglyceryl transfer). In terms of biological role, catalyzes the transfer of the diacylglyceryl group from phosphatidylglycerol to the sulfhydryl group of the N-terminal cysteine of a prolipoprotein, the first step in the formation of mature lipoproteins. The chain is Phosphatidylglycerol--prolipoprotein diacylglyceryl transferase from Corynebacterium diphtheriae (strain ATCC 700971 / NCTC 13129 / Biotype gravis).